Reading from the N-terminus, the 1370-residue chain is DNA-directed RNA polymerase subunit beta (1370 aa).

It belongs to the RNA polymerase beta chain family. As to quaternary structure, the RNAP catalytic core consists of 2 alpha, 1 beta, 1 beta' and 1 omega subunit. When a sigma factor is associated with the core the holoenzyme is formed, which can initiate transcription.

It catalyses the reaction RNA(n) + a ribonucleoside 5'-triphosphate = RNA(n+1) + diphosphate. DNA-dependent RNA polymerase catalyzes the transcription of DNA into RNA using the four ribonucleoside triphosphates as substrates. The chain is DNA-directed RNA polymerase subunit beta from Bordetella bronchiseptica (strain ATCC BAA-588 / NCTC 13252 / RB50) (Alcaligenes bronchisepticus).